A 170-amino-acid chain; its full sequence is Ubiquitin-conjugating enzyme E2 G1 (170 aa).

Methionine 1 carries the N-acetylmethionine modification. Threonine 2 is subject to N-acetylthreonine; in Ubiquitin-conjugating enzyme E2 G1, N-terminally processed. The 162-residue stretch at 5–166 (QSALLLRRQL…VARCVRKSQE (162 aa)) folds into the UBC core domain. Cysteine 90 acts as the Glycyl thioester intermediate in catalysis.

It belongs to the ubiquitin-conjugating enzyme family. Autoubiquitinated.

The catalysed reaction is S-ubiquitinyl-[E1 ubiquitin-activating enzyme]-L-cysteine + [E2 ubiquitin-conjugating enzyme]-L-cysteine = [E1 ubiquitin-activating enzyme]-L-cysteine + S-ubiquitinyl-[E2 ubiquitin-conjugating enzyme]-L-cysteine.. It participates in protein modification; protein ubiquitination. Functionally, accepts ubiquitin from the E1 complex and catalyzes its covalent attachment to other proteins. In vitro catalyzes 'Lys-48'-, as well as 'Lys-63'-linked polyubiquitination. May be involved in degradation of muscle-specific proteins. Mediates polyubiquitination of CYP3A4. This chain is Ubiquitin-conjugating enzyme E2 G1 (UBE2G1), found in Macaca fascicularis (Crab-eating macaque).